We begin with the raw amino-acid sequence, 391 residues long: Histidinol-phosphate aminotransferase (391 aa).

An N6-(pyridoxal phosphate)lysine modification is found at K246.

The protein belongs to the class-II pyridoxal-phosphate-dependent aminotransferase family. Histidinol-phosphate aminotransferase subfamily. Requires pyridoxal 5'-phosphate as cofactor.

It carries out the reaction L-histidinol phosphate + 2-oxoglutarate = 3-(imidazol-4-yl)-2-oxopropyl phosphate + L-glutamate. It functions in the pathway amino-acid biosynthesis; L-histidine biosynthesis; L-histidine from 5-phospho-alpha-D-ribose 1-diphosphate: step 7/9. The protein is Histidinol-phosphate aminotransferase of Methanopyrus kandleri (strain AV19 / DSM 6324 / JCM 9639 / NBRC 100938).